A 389-amino-acid chain; its full sequence is Monomeric sarcosine oxidase (389 aa).

8 to 38 (DVIVVGAGSMGMAAGYYLSKQGVKTLLVDSF) is an FAD binding site. S-8alpha-FAD cysteine is present on Cys-318.

It belongs to the MSOX/MTOX family. MSOX subfamily. In terms of assembly, monomer. FAD is required as a cofactor.

The protein resides in the cytoplasm. The catalysed reaction is sarcosine + O2 + H2O = formaldehyde + glycine + H2O2. In terms of biological role, catalyzes the oxidative demethylation of sarcosine. This is Monomeric sarcosine oxidase (soxA) from Arthrobacter sp. (strain TE1826).